The following is a 384-amino-acid chain: S-adenosylmethionine synthase (384 aa).

His-15 provides a ligand contact to ATP. Asp-17 lines the Mg(2+) pocket. Residue Glu-43 coordinates K(+). L-methionine contacts are provided by Glu-56 and Gln-99. The interval 99-109 (QSPDINQGVDR) is flexible loop. Residues 164-166 (DAK), 231-232 (RF), Asp-240, 246-247 (RK), Ala-263, and Lys-267 each bind ATP. Asp-240 is an L-methionine binding site. Lys-271 provides a ligand contact to L-methionine.

It belongs to the AdoMet synthase family. In terms of assembly, homotetramer; dimer of dimers. The cofactor is Mg(2+). Requires K(+) as cofactor.

The protein localises to the cytoplasm. The catalysed reaction is L-methionine + ATP + H2O = S-adenosyl-L-methionine + phosphate + diphosphate. It functions in the pathway amino-acid biosynthesis; S-adenosyl-L-methionine biosynthesis; S-adenosyl-L-methionine from L-methionine: step 1/1. In terms of biological role, catalyzes the formation of S-adenosylmethionine (AdoMet) from methionine and ATP. The overall synthetic reaction is composed of two sequential steps, AdoMet formation and the subsequent tripolyphosphate hydrolysis which occurs prior to release of AdoMet from the enzyme. The sequence is that of S-adenosylmethionine synthase from Shewanella halifaxensis (strain HAW-EB4).